Reading from the N-terminus, the 259-residue chain is Global transcriptional regulator CodY (259 aa).

Residues Met1–Leu155 are GAF domain. Residues Ala203–Arg222 constitute a DNA-binding region (H-T-H motif). Ser215 is subject to Phosphoserine.

It belongs to the CodY family.

It is found in the cytoplasm. Its function is as follows. DNA-binding global transcriptional regulator which is involved in the adaptive response to starvation and acts by directly or indirectly controlling the expression of numerous genes in response to nutrient availability. During rapid exponential growth, CodY is highly active and represses genes whose products allow adaptation to nutrient depletion. This Halalkalibacterium halodurans (strain ATCC BAA-125 / DSM 18197 / FERM 7344 / JCM 9153 / C-125) (Bacillus halodurans) protein is Global transcriptional regulator CodY.